The following is a 282-amino-acid chain: MKFSTILTGSLFATAALAAPLTEKRRARKEARAAGKRHSNPPYIPGSDKEILKLNGTTNEEYSSNWAGAVLIGDGYTKVTGEFTVPSVSAGSSGSSGYGGGYGYWKNKRQSEEYCASAWVGIDGDTCETAILQTGVDFCYEDGQTSYDAWYEWYPDYAYDFSDITISEGDSIKVTVEATSKSSGSATVENLTTGQSVTHTFSGNVEGDLCETNAEWIVEDFESGDSLVAFADFGSVTFTNAEATSGGSTVGPSDATVMDIEQDGSVLTETSVSGDSVTVTYV.

The signal sequence occupies residues 1–18; the sequence is MKFSTILTGSLFATAALA. 2 consecutive propeptides follow at residues 19 to 59 and 99 to 109; these read APLT…GTTN and GGGYGYWKNKR. A compositionally biased stretch (basic residues) spans 27 to 39; the sequence is ARKEARAAGKRHS. The interval 27–46 is disordered; sequence ARKEARAAGKRHSNPPYIPG. A Pyrrolidone carboxylic acid modification is found at Q110. 2 cysteine pairs are disulfide-bonded: C115–C139 and C127–C210.

This sequence belongs to the peptidase G1 family. As to quaternary structure, heterodimer of two noncovalently bound light and heavy chains.

It catalyses the reaction Preferential cleavage in B chain of insulin: 3-Asn-|-Gln-4, 13-Gly-|-Ala-14, and 26-Tyr-|-Thr-27.. The chain is Aspergillopepsin-2 from Aspergillus niger.